We begin with the raw amino-acid sequence, 506 residues long: Cytochrome P450 monooxygenase TES1 (506 aa).

The helical transmembrane segment at 26–46 threads the bilayer; that stretch reads MSVVLAGLILLASIYFPRFMF. N-linked (GlcNAc...) asparagine glycans are attached at residues asparagine 167, asparagine 201, asparagine 298, and asparagine 427. A heme-binding site is contributed by cysteine 440.

The protein belongs to the cytochrome P450 family. Heme is required as a cofactor.

It is found in the membrane. Its pathway is phytotoxin biosynthesis. Functionally, cytochrome P450 monooxygenase; part of the gene cluster that mediates the biosynthesis of the phytotoxin tentoxin, an inhibitor the F1-ATPase activity of chloroplasts, resulting in chlorosis in sensitive plants. Tentoxin is a cyclic tetrapeptide that consists of four amino acid residues: glycine (Gly), alanine (Ala), leucine (Leu), and dehydrophenylalanine (DPhe). In addition, both the Ala and DPhe residues are N-methylated. The nonribosomal peptide synthetase TES assembles tentoxin from the four substrate amino acids. The adenylation domains of each of the 4 modules are responsible for the activation of Gly, Ala, Leu and DPhe, respectively. In addition, the N-methyltransferase domains in the second and fourth modules of TES could be responsible for N-methylation of Ala and DPhe residues. Finally, the condensation domain located in the termination module probably catalyzes the formation of the intramolecular macrocyclization and then the release of tentoxin. The cytochrome P450 monooxygenase TES1 is predicted to be involved in the formation of DPhe. This chain is Cytochrome P450 monooxygenase TES1, found in Alternaria alternata (Alternaria rot fungus).